We begin with the raw amino-acid sequence, 205 residues long: uncharacterized protein (205 aa).

Residues 11 to 71 (DKRQAEILEA…RIIETGLDEG (61 aa)) form the HTH tetR-type domain. A DNA-binding region (H-T-H motif) is located at residues 34–53 (TMKDVVEESGFSRGGVYLYF).

This is an uncharacterized protein from Bacillus subtilis (strain 168).